We begin with the raw amino-acid sequence, 1347 residues long: Serine-aspartate repeat-containing protein D (1347 aa).

Residues 1–35 (MLNRENKTAITRKGMVSNRLNKFSIRKYTVGTASI) form the signal peptide. The short motif at 23 to 34 (FSIRKYTVGTAS) is the YSIRK-G/S signaling motif element. A ligand binding A region region spans residues 36 to 568 (LVGTTLIFGL…NNQSGGAGQE (533 aa)). A disordered region spans residues 55 to 185 (STNKELNEAT…NKKVDAKTES (131 aa)). Polar residues-rich tracts occupy residues 62 to 71 (EATTSASDNQ) and 94 to 109 (EMVSSQGNETTSNGNK). A compositionally biased stretch (basic and acidic residues) spans 130–145 (KSDEQASPKSTNEDLN). 2 stretches are compositionally biased toward polar residues: residues 146–155 (TKQTISNQEA) and 163–173 (NKSVVNAQPTN). The segment covering 174–183 (EENKKVDAKT) has biased composition (basic and acidic residues). CNA-B domains follow at residues 569–680 (VYKI…IYKP), 681–791 (KYNL…YKTP), 792–901 (KYNL…FYKP), 902–1012 (TYNL…YKTS), and 1013–1123 (KYSL…EEDT). Disordered stretches follow at residues 857–883 (ETPSGYTPTQVGSGTDEGIDSNGTSTT), 972–992 (YTPTSVTSGNDTEKDSNGLTT), and 1078–1323 (EKPA…SNNA). Polar residues-rich tracts occupy residues 860 to 869 (SGYTPTQVGS) and 972 to 981 (YTPTSVTSGN). Composition is skewed to acidic residues over residues 1091–1101 (TEDDKDADGGE) and 1118–1286 (YFEE…DSDS). An LPXTG sorting signal motif is present at residues 1310–1314 (LPETG). Threonine 1313 is modified (pentaglycyl murein peptidoglycan amidated threonine). Residues 1314-1347 (GNENSGSNNATLFGGLFAALGSLLLFGRRKKQNK) constitute a propeptide, removed by sortase.

Belongs to the serine-aspartate repeat-containing protein (SDr) family. Interacts with host DSG1; this interaction increases S.aureus adherence to keratinocytes.

It is found in the secreted. The protein localises to the cell wall. In terms of biological role, cell surface-associated calcium-binding protein which plays an important role in adhesion and pathogenesis. Mediates interactions with components of the extracellular matrix such as host DSG1 to promote bacterial adhesion to host cells. Contributes to the resistance to killing by innate immune components such as neutrophils present in blood and thus attenuates bacterial clearance. The chain is Serine-aspartate repeat-containing protein D (sdrD) from Staphylococcus aureus (strain MW2).